We begin with the raw amino-acid sequence, 342 residues long: tRNA N6-adenosine threonylcarbamoyltransferase (342 aa).

Residues H111 and H115 each contribute to the Fe cation site. Substrate contacts are provided by residues 133–137 (AVSGG), D166, G179, D183, and N272. D300 contacts Fe cation.

This sequence belongs to the KAE1 / TsaD family. It depends on Fe(2+) as a cofactor.

It localises to the cytoplasm. The catalysed reaction is L-threonylcarbamoyladenylate + adenosine(37) in tRNA = N(6)-L-threonylcarbamoyladenosine(37) in tRNA + AMP + H(+). Its function is as follows. Required for the formation of a threonylcarbamoyl group on adenosine at position 37 (t(6)A37) in tRNAs that read codons beginning with adenine. Is involved in the transfer of the threonylcarbamoyl moiety of threonylcarbamoyl-AMP (TC-AMP) to the N6 group of A37, together with TsaE and TsaB. TsaD likely plays a direct catalytic role in this reaction. The sequence is that of tRNA N6-adenosine threonylcarbamoyltransferase from Geobacter sp. (strain M21).